A 58-amino-acid polypeptide reads, in one-letter code: Probable ferredoxin (58 aa).

2 4Fe-4S ferredoxin-type domains span residues 2-30 (VAKV…LNDD) and 31-58 (GIAT…ITIE). 8 residues coordinate [4Fe-4S] cluster: cysteine 10, cysteine 13, cysteine 16, cysteine 20, cysteine 40, cysteine 43, cysteine 46, and cysteine 50.

It depends on [4Fe-4S] cluster as a cofactor.

Functionally, ferredoxins are iron-sulfur proteins that transfer electrons in a wide variety of metabolic reactions. The protein is Probable ferredoxin of Methanosarcina thermophila.